The primary structure comprises 138 residues: Nucleoside diphosphate kinase (138 aa).

ATP contacts are provided by Lys-9, Phe-57, Arg-85, Thr-91, Arg-102, and Asn-112. Residue His-115 is the Pros-phosphohistidine intermediate of the active site.

Belongs to the NDK family. As to quaternary structure, homotetramer. The cofactor is Mg(2+).

It is found in the cytoplasm. It catalyses the reaction a 2'-deoxyribonucleoside 5'-diphosphate + ATP = a 2'-deoxyribonucleoside 5'-triphosphate + ADP. It carries out the reaction a ribonucleoside 5'-diphosphate + ATP = a ribonucleoside 5'-triphosphate + ADP. Functionally, major role in the synthesis of nucleoside triphosphates other than ATP. The ATP gamma phosphate is transferred to the NDP beta phosphate via a ping-pong mechanism, using a phosphorylated active-site intermediate. This is Nucleoside diphosphate kinase from Lawsonia intracellularis (strain PHE/MN1-00).